The chain runs to 357 residues: UDP-N-acetylglucosamine--N-acetylmuramyl-(pentapeptide) pyrophosphoryl-undecaprenol N-acetylglucosamine transferase (357 aa).

UDP-N-acetyl-alpha-D-glucosamine contacts are provided by residues 12 to 14, Asn-124, Arg-163, Ser-191, Ile-245, 264 to 269, and Gln-290; these read TGG and ALTVSE.

This sequence belongs to the glycosyltransferase 28 family. MurG subfamily.

Its subcellular location is the cell inner membrane. It carries out the reaction di-trans,octa-cis-undecaprenyl diphospho-N-acetyl-alpha-D-muramoyl-L-alanyl-D-glutamyl-meso-2,6-diaminopimeloyl-D-alanyl-D-alanine + UDP-N-acetyl-alpha-D-glucosamine = di-trans,octa-cis-undecaprenyl diphospho-[N-acetyl-alpha-D-glucosaminyl-(1-&gt;4)]-N-acetyl-alpha-D-muramoyl-L-alanyl-D-glutamyl-meso-2,6-diaminopimeloyl-D-alanyl-D-alanine + UDP + H(+). Its pathway is cell wall biogenesis; peptidoglycan biosynthesis. Functionally, cell wall formation. Catalyzes the transfer of a GlcNAc subunit on undecaprenyl-pyrophosphoryl-MurNAc-pentapeptide (lipid intermediate I) to form undecaprenyl-pyrophosphoryl-MurNAc-(pentapeptide)GlcNAc (lipid intermediate II). The protein is UDP-N-acetylglucosamine--N-acetylmuramyl-(pentapeptide) pyrophosphoryl-undecaprenol N-acetylglucosamine transferase of Nitrosospira multiformis (strain ATCC 25196 / NCIMB 11849 / C 71).